The sequence spans 470 residues: Dihydrolipoyl dehydrogenase (470 aa).

Residues 39–47 (EKGNLGGVC), lysine 56, and alanine 119 each bind FAD. Cysteine 47 and cysteine 52 are joined by a disulfide. NAD(+) contacts are provided by residues 183 to 187 (GGGYI), glutamate 206, and 271 to 274 (TVGR). Aspartate 314 and alanine 322 together coordinate FAD. Histidine 446 (proton acceptor) is an active-site residue.

The protein belongs to the class-I pyridine nucleotide-disulfide oxidoreductase family. Homodimer. Identified in a complex with PdhC. FAD serves as cofactor.

It is found in the cytoplasm. It carries out the reaction N(6)-[(R)-dihydrolipoyl]-L-lysyl-[protein] + NAD(+) = N(6)-[(R)-lipoyl]-L-lysyl-[protein] + NADH + H(+). Its function is as follows. Lipoamide dehydrogenase is a component of the alpha-ketoacid dehydrogenase complexes. This is Dihydrolipoyl dehydrogenase (pdhD) from Geobacillus stearothermophilus (Bacillus stearothermophilus).